The sequence spans 236 residues: 7-cyano-7-deazaguanine synthase (236 aa).

21–31 is an ATP binding site; the sequence is LSGGLDSATVL. 4 residues coordinate Zn(2+): C202, C212, C215, and C218.

It belongs to the QueC family. It depends on Zn(2+) as a cofactor.

It carries out the reaction 7-carboxy-7-deazaguanine + NH4(+) + ATP = 7-cyano-7-deazaguanine + ADP + phosphate + H2O + H(+). Its pathway is purine metabolism; 7-cyano-7-deazaguanine biosynthesis. Functionally, catalyzes the ATP-dependent conversion of 7-carboxy-7-deazaguanine (CDG) to 7-cyano-7-deazaguanine (preQ(0)). The sequence is that of 7-cyano-7-deazaguanine synthase from Frankia casuarinae (strain DSM 45818 / CECT 9043 / HFP020203 / CcI3).